A 544-amino-acid polypeptide reads, in one-letter code: Aspartokinase 2, chloroplastic (544 aa).

The transit peptide at 1-84 (MASLQLYGVK…SSGTGKELTC (84 aa)) directs the protein to the chloroplast. Positions 87, 90, and 119 each coordinate ATP. Glutamate 203 is a binding site for substrate. ACT domains lie at 401–479 (IAST…RRSI) and 481–544 (SLIG…ETDP).

It belongs to the aspartokinase family. In terms of tissue distribution, expressed in stems, leaves, floral organs and young seedlings.

The protein localises to the plastid. It localises to the chloroplast. The catalysed reaction is L-aspartate + ATP = 4-phospho-L-aspartate + ADP. It functions in the pathway amino-acid biosynthesis; L-lysine biosynthesis via DAP pathway; (S)-tetrahydrodipicolinate from L-aspartate: step 1/4. It participates in amino-acid biosynthesis; L-methionine biosynthesis via de novo pathway; L-homoserine from L-aspartate: step 1/3. The protein operates within amino-acid biosynthesis; L-threonine biosynthesis; L-threonine from L-aspartate: step 1/5. With respect to regulation, allosterically inhibited by lysine, but not by S-adenosyl-L-methionine (SAM). K(0.5) for lysine in the presence of physiological concentrations of substrates is 12.5 uM. No inhibition by threonine or leucine and no activation or inhibition by alanine, cysteine, isoleucine, serine, valine, methionine, glutamine, asparagine, glutamic acid or arginine. Its function is as follows. Involved in the first step of essential amino acids lysine, threonine, methionine and isoleucine synthesis via the aspartate-family pathway. The chain is Aspartokinase 2, chloroplastic (AK2) from Arabidopsis thaliana (Mouse-ear cress).